The sequence spans 408 residues: Leucine aminopeptidase 1 (408 aa).

An N-terminal signal peptide occupies residues 1-16 (MKVSSAIALLLPVVAA). Residues 17-89 (RFVDSAFEQD…SAQSATTGPA (73 aa)) constitute a propeptide that is removed on maturation. 3 N-linked (GlcNAc...) asparagine glycosylation sites follow: asparagine 95, asparagine 108, and asparagine 182. Zn(2+) contacts are provided by histidine 190, aspartate 209, glutamate 248, and aspartate 275. Cysteine 324 and cysteine 328 are oxidised to a cystine. Histidine 357 provides a ligand contact to Zn(2+).

The protein belongs to the peptidase M28 family. M28E subfamily. In terms of assembly, monomer. It depends on Zn(2+) as a cofactor.

It is found in the secreted. Functionally, extracellular aminopeptidase that allows assimilation of proteinaceous substrates. In Grosmannia clavigera (strain kw1407 / UAMH 11150) (Blue stain fungus), this protein is Leucine aminopeptidase 1 (LAP1).